An 810-amino-acid polypeptide reads, in one-letter code: Nuclear pore complex protein NUP88 (810 aa).

The disordered stretch occupies residues 1–23 (MKFNFNETEDAPDSRRSPTPKEP). The stretch at 646 to 748 (APNLKRIIDD…RARVKKSTQK (103 aa)) forms a coiled coil.

In terms of assembly, part of the nuclear pore complex (NPC). The NPC has an eight-fold symmetrical structure comprising a central transport channel and two rings, the cytoplasmic and nuclear rings, to which eight filaments are attached. The cytoplasmic filaments have loose ends, while the nuclear filaments are joined in a distal ring, forming a nuclear basket. NPCs are highly dynamic in configuration and composition, and can be devided in 3 subcomplexes, the NUP62 subcomplex, the NUP107-160 subcomplex and the NUP93 subcomplex, containing approximately 30 different nucleoporin proteins.

It localises to the nucleus envelope. Its subcellular location is the nucleus. The protein resides in the nuclear pore complex. Involved in the regulation of exportin-mediated nuclear protein export. Required for resistance mediated by multiple R proteins and for the appropriate nuclear accumulation of SNC1 and of the downstream defense signaling components EDS1 and NPR1. Not involved in salt tolerance, ethylene and auxin responses, but required for systemic acquired resistance. The chain is Nuclear pore complex protein NUP88 from Arabidopsis thaliana (Mouse-ear cress).